A 486-amino-acid chain; its full sequence is Corytuberine synthase (486 aa).

Residues 6–21 form a helical membrane-spanning segment; it reads ALFSLIPVILVFILLL. Cys428 is a heme binding site.

This sequence belongs to the cytochrome P450 family. Requires heme as cofactor.

It localises to the endoplasmic reticulum membrane. It carries out the reaction (S)-reticuline + reduced [NADPH--hemoprotein reductase] + O2 = (S)-corytuberine + oxidized [NADPH--hemoprotein reductase] + 2 H2O + 2 H(+). With respect to regulation, inhibited by ketoconazole. Cytochrome P450 that catalyzes an intramolecular C-C phenol coupling of (S)-reticuline in magnoflorine biosynthesis. Catalyzes the formation of (S)-corytuberine from (S)-reticuline, and also, with a lover efficiency, the 4'-O-demethylation of codamine to produce orientaline, and subsequent C-C-phenol coupling of orientaline. Can also use (R,S)-norreticuline, (R,S)-orientaline, (S)-N-methylcoclaurine and (S)-coclaurine as substrates, but not (R,S)-6-O-methyllaudanosoline, (R,S)-6-O-methylnorlaudanosoline, (R,S)-laudanine, (R,S)-norlaudanine, (R,S)-4'-O-methyllaudanosoline, (R,S)-pseudocodamine, (R,S)-norpseudocodamine, (R,S)-laudanosine, (R,S)-norlaudanosine, (R,S)-laudanosoline or (R,S)-norlaudanosoline. In Coptis japonica (Japanese goldthread), this protein is Corytuberine synthase.